The following is a 309-amino-acid chain: UPF0252 protein PH0672 (309 aa).

The next 2 membrane-spanning stretches (helical) occupy residues 5–25 (SVIIFIVIMLGIGCLNLNESI) and 106–126 (AVLTAGLLLASNISPVYLMIF).

Belongs to the UPF0252 family.

The protein localises to the cell membrane. This chain is UPF0252 protein PH0672, found in Pyrococcus horikoshii (strain ATCC 700860 / DSM 12428 / JCM 9974 / NBRC 100139 / OT-3).